The sequence spans 364 residues: Fructose-bisphosphate aldolase A (364 aa).

Tyrosine 5 is modified (phosphotyrosine). Threonine 9 bears the Phosphothreonine mark. Phosphoserine occurs at positions 36 and 39. Lysine 42 carries the N6-acetyllysine; alternate modification. Lysine 42 participates in a covalent cross-link: Glycyl lysine isopeptide (Lys-Gly) (interchain with G-Cter in SUMO1); alternate. Residue lysine 42 forms a Glycyl lysine isopeptide (Lys-Gly) (interchain with G-Cter in SUMO2); alternate linkage. Arginine 43 contributes to the beta-D-fructose 1,6-bisphosphate binding site. A Phosphoserine modification is found at serine 46. Position 99 is an N6-(2-hydroxyisobutyryl)lysine (lysine 99). Position 108 is an N6-acetyllysine (lysine 108). Lysine 111 carries the post-translational modification N6-acetyllysine; alternate. Lysine 111 is modified (N6-malonyllysine; alternate). Serine 132 carries the phosphoserine modification. An N6-(2-hydroxyisobutyryl)lysine modification is found at lysine 147. The active-site Proton acceptor is the glutamate 188. Lysine 230 serves as the catalytic Schiff-base intermediate with dihydroxyacetone-P. A Phosphoserine modification is found at serine 272. Residues 272–274 (SGG), serine 301, and arginine 304 each bind beta-D-fructose 1,6-bisphosphate. Lysine 312 is subject to N6-malonyllysine. An N6-acetyllysine modification is found at lysine 330.

It belongs to the class I fructose-bisphosphate aldolase family. As to quaternary structure, homotetramer. Interacts with SNX9 and WAS. Interacts with FBP2; the interaction blocks FBP2 inhibition by physiological concentrations of AMP and reduces inhibition by Ca(2+).

The protein localises to the cytoplasm. It is found in the myofibril. The protein resides in the sarcomere. It localises to the i band. Its subcellular location is the m line. It carries out the reaction beta-D-fructose 1,6-bisphosphate = D-glyceraldehyde 3-phosphate + dihydroxyacetone phosphate. The protein operates within carbohydrate degradation; glycolysis; D-glyceraldehyde 3-phosphate and glycerone phosphate from D-glucose: step 4/4. Its function is as follows. Catalyzes the reversible conversion of beta-D-fructose 1,6-bisphosphate (FBP) into two triose phosphate and plays a key role in glycolysis and gluconeogenesis. In addition, may also function as scaffolding protein. In Pan troglodytes (Chimpanzee), this protein is Fructose-bisphosphate aldolase A (ALDOA).